Reading from the N-terminus, the 721-residue chain is Centlein (721 aa).

Residues Lys-52 to Asn-164 adopt a coiled-coil conformation. 2 disordered regions span residues Arg-156–Met-180 and Glu-259–Val-288. 2 stretches are compositionally biased toward basic and acidic residues: residues Pro-165–Ser-178 and Ile-267–Ala-284. Coiled-coil stretches lie at residues Leu-345 to Lys-515 and Gln-573 to Ser-626. Thr-658 carries the post-translational modification Phosphothreonine.

In terms of assembly, interacts with CEP250 and CEP68. Interacts with NEK2; the interaction leads to phosphorylation of CNTLN. Post-translationally, phosphorylated directly or indirectly by NEK2.

The protein resides in the cytoplasm. Its subcellular location is the cytoskeleton. It localises to the microtubule organizing center. The protein localises to the centrosome. It is found in the centriole. Its function is as follows. Required for centrosome cohesion and recruitment of CEP68 to centrosomes. The sequence is that of Centlein from Rattus norvegicus (Rat).